Reading from the N-terminus, the 202-residue chain is NADH-quinone oxidoreductase subunit B 2 (202 aa).

The [4Fe-4S] cluster site is built by cysteine 38, cysteine 39, cysteine 104, and cysteine 133.

Belongs to the complex I 20 kDa subunit family. In terms of assembly, NDH-1 is composed of 14 different subunits. Subunits NuoB, C, D, E, F, and G constitute the peripheral sector of the complex. [4Fe-4S] cluster serves as cofactor.

The protein resides in the cell inner membrane. The catalysed reaction is a quinone + NADH + 5 H(+)(in) = a quinol + NAD(+) + 4 H(+)(out). Functionally, NDH-1 shuttles electrons from NADH, via FMN and iron-sulfur (Fe-S) centers, to quinones in the respiratory chain. The immediate electron acceptor for the enzyme in this species is believed to be ubiquinone. Couples the redox reaction to proton translocation (for every two electrons transferred, four hydrogen ions are translocated across the cytoplasmic membrane), and thus conserves the redox energy in a proton gradient. This Koribacter versatilis (strain Ellin345) protein is NADH-quinone oxidoreductase subunit B 2.